Consider the following 552-residue polypeptide: Hyaluronan synthase 2 (552 aa).

At 1 to 11 (MHCERFLCILR) the chain is on the cytoplasmic side. The helical transmembrane segment at 12–32 (IIGTTLFGVSLLLGITAAYIV) threads the bilayer. Over 33-45 (GYQFIQTDNYYFS) the chain is Extracellular. Residues 46–66 (FGLYGAFLASHLIIQSLFAFL) form a helical membrane-spanning segment. Topologically, residues 67–374 (EHRKMKKSLE…NAMWFHKHHL (308 aa)) are cytoplasmic. Position 110 is a phosphothreonine (Thr-110). Residue Lys-190 forms a Glycyl lysine isopeptide (Lys-Gly) (interchain with G-Cter in ubiquitin) linkage. Ser-221 is a glycosylation site (O-linked (GlcNAc) serine). A Phosphothreonine modification is found at Thr-328. The chain crosses the membrane as a helical span at residues 375–395 (WMTYEAVITGFFPFFLIATVI). Residues 396 to 402 (QLFYRGK) are Extracellular-facing. The chain crosses the membrane as a helical span at residues 403-423 (IWNILLFLLTVQLVGLIKSSF). Topologically, residues 424 to 429 (ASCLRG) are cytoplasmic. The helical transmembrane segment at 430 to 450 (NIVMVFMSLYSVLYMSSLLPA) threads the bilayer. Residues 451–475 (KMFAIATINKAGWGTSGRKTIVVNF) lie on the Extracellular side of the membrane. The helical transmembrane segment at 476–496 (IGLIPVSVWFTILLGGVIFTI) threads the bilayer. Residues 497-510 (YKESKKPFSESKQT) are Cytoplasmic-facing. The chain crosses the membrane as a helical span at residues 511–531 (VLIVGTLLYACYWVMLLTLYV). Over 532–552 (VLINKCGRRKKGQQYDMVLDV) the chain is Extracellular.

This sequence belongs to the NodC/HAS family. In terms of assembly, homodimer; dimerization promotes enzymatic activity. Forms heterodimer with HAS3. Forms heterodimer with HAS1. Mg(2+) is required as a cofactor. In terms of processing, phosphorylation at Thr-328 is essential for hyaluronan synthase activity. O-GlcNAcylation at Ser-221 increases the stability of HAS2 and plasma membrane localization. Post-translationally, ubiquitination at Lys-190; this ubiquitination is essential for hyaluronan synthase activity and homo- or hetero-oligomerization. Can also be poly-ubiquitinated. Deubiquitinated by USP17L22/USP17 and USP4. USP17L22/USP17 efficiently removes 'Lys-63'- and 'Lys-48'-linked polyubiquitin chains, whereas USP4 preferentially removes monoubiquitination and, partially, both 'Lys-63'- and 'Lys-48'-linked polyubiquitin chain. In terms of tissue distribution, overexpressed in skin fibroblasts.

It is found in the cell membrane. Its subcellular location is the endoplasmic reticulum membrane. The protein localises to the vesicle. The protein resides in the golgi apparatus membrane. It localises to the lysosome. The catalysed reaction is [hyaluronan](n) + UDP-N-acetyl-alpha-D-glucosamine = N-acetyl-beta-D-glucosaminyl-(1-&gt;4)-[hyaluronan](n) + UDP + H(+). It catalyses the reaction N-acetyl-beta-D-glucosaminyl-(1-&gt;4)-[hyaluronan](n) + UDP-alpha-D-glucuronate = [hyaluronan](n+1) + UDP + H(+). It participates in glycan biosynthesis; hyaluronan biosynthesis. Catalyzes the addition of GlcNAc or GlcUA monosaccharides to the nascent hyaluronan polymer. Therefore, it is essential to hyaluronan synthesis a major component of most extracellular matrices that has a structural role in tissues architectures and regulates cell adhesion, migration and differentiation. This is one of three isoenzymes responsible for cellular hyaluronan synthesis and it is particularly responsible for the synthesis of high molecular mass hyaluronan. This Heterocephalus glaber (Naked mole rat) protein is Hyaluronan synthase 2 (Has2).